The primary structure comprises 585 residues: Proline-rich protein 14 (585 aa).

Met-1 is modified (N-acetylmethionine). The segment at 1–135 (MDLPGDSSPP…TLRRRSRTTP (135 aa)) is sufficient for heterochromatin association in interphase and chromatin association in anaphase. Disordered regions lie at residues 23–46 (ALWG…PLEK), 73–150 (TSIP…RAPQ), and 189–241 (IVRQ…RPRL). The tract at residues 85-378 (PVHRQPPASP…MARAPPPPRP (294 aa)) is required for the interaction with GRB2 and sufficient to promote the phosphorylation of AKT and cell proliferation. The segment covering 119–132 (RIHRTSSTLRRRSR) has biased composition (basic residues). The tract at residues 136-365 (GPEEGPSQKV…RPRPRRHTVG (230 aa)) is required for nuclear lamina association. Pro residues predominate over residues 193 to 205 (PTPPPGDLEPPFQ). At Ser-277 the chain carries Phosphoserine. Disordered stretches follow at residues 290–445 (EAEQ…KVSR) and 525–557 (DSSL…PDVG). Over residues 337-356 (LGPPGPGTCTWPPAPPQPSR) the composition is skewed to pro residues. Low complexity predominate over residues 393–409 (SPSLTTSCSSTASTSFS). The tract at residues 518 to 535 (RRAVEFRDSSLPRSRRPS) is required for nuclear localization.

In terms of assembly, interacts (via proline-rich region) with GRB2 (via SH3 domain 2). Interacts (via N-terminus) with CBX5.

It is found in the chromosome. The protein localises to the nucleus. The protein resides in the nucleus lamina. It localises to the nucleoplasm. Its function is as follows. Functions in tethering peripheral heterochromatin to the nuclear lamina during interphase, possibly through the interaction with heterochromatin protein CBX5/HP1 alpha. Might play a role in reattaching heterochromatin to the nuclear lamina at mitotic exit. Promotes myoblast differentiation during skeletal myogenesis, possibly by stimulating transcription factor MyoD activity via binding to CBX5/HP1 alpha. Involved in the positive regulation of the PI3K-Akt-mTOR signaling pathway and in promoting cell proliferation, possibly via binding to GRB2. This chain is Proline-rich protein 14 (PRR14), found in Homo sapiens (Human).